We begin with the raw amino-acid sequence, 246 residues long: UPF0246 protein str1967 (246 aa).

The protein belongs to the UPF0246 family.

The protein is UPF0246 protein str1967 of Streptococcus thermophilus (strain CNRZ 1066).